The following is a 380-amino-acid chain: uncharacterized protein (380 aa).

The 4Fe-4S ferredoxin-type domain occupies 287–318; the sequence is LRPKIYQDKCKNCRECLVEKYCPTFAIKRENG.

This is an uncharacterized protein from Methanocaldococcus jannaschii (strain ATCC 43067 / DSM 2661 / JAL-1 / JCM 10045 / NBRC 100440) (Methanococcus jannaschii).